A 611-amino-acid polypeptide reads, in one-letter code: Dihydroxy-acid dehydratase (611 aa).

Asp81 contributes to the Mg(2+) binding site. Cys122 serves as a coordination point for [2Fe-2S] cluster. The Mg(2+) site is built by Asp123 and Lys124. An N6-carboxylysine modification is found at Lys124. Cys195 provides a ligand contact to [2Fe-2S] cluster. Glu491 provides a ligand contact to Mg(2+). The active-site Proton acceptor is Ser517.

Belongs to the IlvD/Edd family. Homodimer. [2Fe-2S] cluster is required as a cofactor. Mg(2+) serves as cofactor.

It carries out the reaction (2R)-2,3-dihydroxy-3-methylbutanoate = 3-methyl-2-oxobutanoate + H2O. The catalysed reaction is (2R,3R)-2,3-dihydroxy-3-methylpentanoate = (S)-3-methyl-2-oxopentanoate + H2O. It participates in amino-acid biosynthesis; L-isoleucine biosynthesis; L-isoleucine from 2-oxobutanoate: step 3/4. It functions in the pathway amino-acid biosynthesis; L-valine biosynthesis; L-valine from pyruvate: step 3/4. Functions in the biosynthesis of branched-chain amino acids. Catalyzes the dehydration of (2R,3R)-2,3-dihydroxy-3-methylpentanoate (2,3-dihydroxy-3-methylvalerate) into 2-oxo-3-methylpentanoate (2-oxo-3-methylvalerate) and of (2R)-2,3-dihydroxy-3-methylbutanoate (2,3-dihydroxyisovalerate) into 2-oxo-3-methylbutanoate (2-oxoisovalerate), the penultimate precursor to L-isoleucine and L-valine, respectively. The polypeptide is Dihydroxy-acid dehydratase (Agrobacterium fabrum (strain C58 / ATCC 33970) (Agrobacterium tumefaciens (strain C58))).